Reading from the N-terminus, the 809-residue chain is H(+)/Cl(-) exchange transporter 7 (809 aa).

The Cytoplasmic portion of the chain corresponds to 1–130 (MANVSKKVSW…TAFRTVEIKR (130 aa)). A phosphoserine mark is found at S9 and S64. 2 consecutive transmembrane segments (helical) span residues 131 to 163 (WVIC…YRLV) and 178 to 201 (FSLL…VAFI). A Selectivity filter part_1 motif is present at residues 207 to 211 (GSGIP). A chloride-binding site is contributed by S208. Residues 210–217 (IPQIKCFL) constitute an intramembrane region (helical). Transmembrane regions (helical) follow at residues 227 to 245 (RLKT…VVGG) and 251 to 268 (EGPM…ISQG). A Selectivity filter part_2 motif is present at residues 249–253 (GKEGP). Intramembrane regions (helical) lie at residues 292 to 304 (FVSA…VSAA) and 308 to 316 (PVGGVLFSL). Helical transmembrane passes span 326 to 345 (FLTW…LNFV), 379 to 409 (IPIF…FRIR), 414 to 436 (PCLQ…FVLI), 491 to 511 (PMTL…TYGL), and 516 to 539 (GVFI…LSYI). A Selectivity filter part_3 motif is present at residues 516 to 520 (GVFIP). Chloride is bound at residue F518. Residues 549–563 (GKYALMGAAAQLGGI) constitute an intramembrane region (helical). Positions 564–566 (VRM) form an intramembrane region, note=Loop between two helices. Residues 567-578 (TLSLTVIMMEAT) constitute an intramembrane region (helical). Residues 579–582 (SSVT) constitute an intramembrane region (note=Loop between two helices). A helical transmembrane segment spans residues 583-601 (YGFPIMLVLMTAKIVGDVF). At 602–809 (IEGLYDMHIQ…GLEELSLAQT (208 aa)) the chain is on the cytoplasmic side. Position 606 (Y606) interacts with chloride. CBS domains are found at residues 635–699 (MSTP…VFVE) and 745–803 (MNPS…GLEE). Residues 662–664 (HNG) and 787–790 (TRKD) each bind ATP. A Phosphoserine modification is found at S805.

The protein belongs to the chloride channel (TC 2.A.49) family. ClC-7/CLCN7 subfamily. In terms of assembly, chloride channel 7 are heteromers of alpha (CLCN7) and beta (OSTM1) subunits.

The protein resides in the lysosome membrane. The catalysed reaction is 2 chloride(in) + H(+)(out) = 2 chloride(out) + H(+)(in). Functionally, slowly voltage-gated channel mediating the exchange of chloride ions against protons. Functions as antiporter and contributes to the acidification of the lysosome lumen and may be involved in maintaining lysosomal pH. The CLC channel family contains both chloride channels and proton-coupled anion transporters that exchange chloride or another anion for protons. The presence of conserved gating glutamate residues is typical for family members that function as antiporters. The polypeptide is H(+)/Cl(-) exchange transporter 7 (CLCN7) (Bos taurus (Bovine)).